Here is a 131-residue protein sequence, read N- to C-terminus: Sperm microtubule inner protein 11 (131 aa).

The interval 17–44 (SKKRDKTEETNQKDPVPTRLPPIFSEDG) is disordered.

As to quaternary structure, microtubule inner protein component of sperm flagellar doublet microtubules. Expressed in sperm.

Its subcellular location is the cytoplasm. It is found in the cytoskeleton. The protein resides in the flagellum axoneme. In terms of biological role, microtubule inner protein (MIP) part of the dynein-decorated doublet microtubules (DMTs) in flagellum axoneme. May serve to reinforce and thus stabilize the microtubule structure in the sperm flagella. This is Sperm microtubule inner protein 11 (SPMIP11) from Bos taurus (Bovine).